Reading from the N-terminus, the 79-residue chain is Sec-independent protein translocase protein TatA (79 aa).

The helical transmembrane segment at 1-21 (MGGISIWQLLIVALIVVLLFG) threads the bilayer. Positions 43–79 (MSSEEDKKALEDTEAAKTAQTTQQATEKKPESNKEQA) are disordered. The span at 46-57 (EEDKKALEDTEA) shows a compositional bias: basic and acidic residues. A compositionally biased stretch (low complexity) spans 58-67 (AKTAQTTQQA). The segment covering 68–79 (TEKKPESNKEQA) has biased composition (basic and acidic residues).

It belongs to the TatA/E family. As to quaternary structure, the Tat system comprises two distinct complexes: a TatABC complex, containing multiple copies of TatA, TatB and TatC subunits, and a separate TatA complex, containing only TatA subunits. Substrates initially bind to the TatABC complex, which probably triggers association of the separate TatA complex to form the active translocon.

It is found in the cell inner membrane. In terms of biological role, part of the twin-arginine translocation (Tat) system that transports large folded proteins containing a characteristic twin-arginine motif in their signal peptide across membranes. TatA could form the protein-conducting channel of the Tat system. The sequence is that of Sec-independent protein translocase protein TatA from Shewanella baltica (strain OS223).